A 260-amino-acid chain; its full sequence is Thiazole synthase (260 aa).

Residue Lys-102 is the Schiff-base intermediate with DXP of the active site. 1-deoxy-D-xylulose 5-phosphate is bound by residues Gly-163, 189–190 (AG), and 211–212 (NT).

The protein belongs to the ThiG family. Homotetramer. Forms heterodimers with either ThiH or ThiS.

It localises to the cytoplasm. It catalyses the reaction [ThiS sulfur-carrier protein]-C-terminal-Gly-aminoethanethioate + 2-iminoacetate + 1-deoxy-D-xylulose 5-phosphate = [ThiS sulfur-carrier protein]-C-terminal Gly-Gly + 2-[(2R,5Z)-2-carboxy-4-methylthiazol-5(2H)-ylidene]ethyl phosphate + 2 H2O + H(+). The protein operates within cofactor biosynthesis; thiamine diphosphate biosynthesis. In terms of biological role, catalyzes the rearrangement of 1-deoxy-D-xylulose 5-phosphate (DXP) to produce the thiazole phosphate moiety of thiamine. Sulfur is provided by the thiocarboxylate moiety of the carrier protein ThiS. In vitro, sulfur can be provided by H(2)S. The polypeptide is Thiazole synthase (Geobacter sulfurreducens (strain ATCC 51573 / DSM 12127 / PCA)).